The following is a 918-amino-acid chain: Glutamate receptor 2.5 (918 aa).

Positions 1–30 (MSLFHHLVSRFLSLWLLIFLVFLVLSLGKS) are cleaved as a signal peptide. The Extracellular portion of the chain corresponds to 31–586 (QKEALQVKVG…WVFLKPLTKE (556 aa)). N46, N58, N122, N336, N340, and N546 each carry an N-linked (GlcNAc...) asparagine glycan. The chain crosses the membrane as a helical span at residues 587 to 607 (LWLVTAASFLYIGIMVWIFEY). Residues 608–616 (QADEEFREQ) lie on the Cytoplasmic side of the membrane. Residues 617-637 (MIIDKISSVFYFSFSTLFFAH) traverse the membrane as a helical segment. The Cytoplasmic portion of the chain corresponds to 638–647 (RRPSESFFTR). The chain crosses the membrane as a helical span at residues 648–668 (VLVVVWCFVLLILTQSYTATL). The Extracellular portion of the chain corresponds to 669 to 828 (TSMLTVQELR…DSPIQLDHHS (160 aa)). N791 carries N-linked (GlcNAc...) asparagine glycosylation. A helical membrane pass occupies residues 829-849 (FEALFLIVFVVSVILLLLMLA). At 850–918 (SRGYQERQHN…VAPLSRLKSA (69 aa)) the chain is on the cytoplasmic side. The tract at residues 857–881 (QHNASPNLPNDQANAAQEEVNEEGN) is disordered. The span at 866–881 (NDQANAAQEEVNEEGN) shows a compositional bias: low complexity.

Belongs to the glutamate-gated ion channel (TC 1.A.10.1) family. In terms of assembly, may form heteromers. In terms of tissue distribution, expressed predominantly in roots.

Its subcellular location is the membrane. Functionally, glutamate-gated receptor that probably acts as a non-selective cation channel. May be involved in light-signal transduction and calcium homeostasis via the regulation of calcium influx into cells. This chain is Glutamate receptor 2.5 (GLR2.5), found in Arabidopsis thaliana (Mouse-ear cress).